The primary structure comprises 120 residues: UPF0102 protein Moth_0988 (120 aa).

This sequence belongs to the UPF0102 family.

The polypeptide is UPF0102 protein Moth_0988 (Moorella thermoacetica (strain ATCC 39073 / JCM 9320)).